We begin with the raw amino-acid sequence, 141 residues long: Large ribosomal subunit protein uL11 (141 aa).

This sequence belongs to the universal ribosomal protein uL11 family. In terms of assembly, part of the ribosomal stalk of the 50S ribosomal subunit. Interacts with L10 and the large rRNA to form the base of the stalk. L10 forms an elongated spine to which L12 dimers bind in a sequential fashion forming a multimeric L10(L12)X complex. One or more lysine residues are methylated.

Its function is as follows. Forms part of the ribosomal stalk which helps the ribosome interact with GTP-bound translation factors. The sequence is that of Large ribosomal subunit protein uL11 from Maridesulfovibrio salexigens (strain ATCC 14822 / DSM 2638 / NCIMB 8403 / VKM B-1763) (Desulfovibrio salexigens).